A 447-amino-acid polypeptide reads, in one-letter code: Tubulin beta chain (447 aa).

Positions 11, 69, 138, 142, 143, 144, 204, and 226 each coordinate GTP. Glutamate 69 provides a ligand contact to Mg(2+). The segment at 424 to 447 (QYQEASVSEGEEEYDEEAPLEAEE) is disordered. A compositionally biased stretch (acidic residues) spans 432-447 (EGEEEYDEEAPLEAEE).

Belongs to the tubulin family. Dimer of alpha and beta chains. A typical microtubule is a hollow water-filled tube with an outer diameter of 25 nm and an inner diameter of 15 nM. Alpha-beta heterodimers associate head-to-tail to form protofilaments running lengthwise along the microtubule wall with the beta-tubulin subunit facing the microtubule plus end conferring a structural polarity. Microtubules usually have 13 protofilaments but different protofilament numbers can be found in some organisms and specialized cells. Requires Mg(2+) as cofactor.

It is found in the cytoplasm. Its subcellular location is the cytoskeleton. In terms of biological role, tubulin is the major constituent of microtubules, a cylinder consisting of laterally associated linear protofilaments composed of alpha- and beta-tubulin heterodimers. Microtubules grow by the addition of GTP-tubulin dimers to the microtubule end, where a stabilizing cap forms. Below the cap, tubulin dimers are in GDP-bound state, owing to GTPase activity of alpha-tubulin. The chain is Tubulin beta chain (TUB1) from Cochliobolus heterostrophus (Southern corn leaf blight fungus).